A 964-amino-acid polypeptide reads, in one-letter code: MQKIKSLMTRQGLKSPPESLNDLGAFESLRVPGKEEFRELREQPSDPQAEQELINSIEQVYFSADPFDIVKYELEKLPPVLNLQELEEYRDKLKQQQAAVSKKVADLILEKQPAYVKELERVTSLQTGLQLAAVICTNSRRHLNIAKEGFTQASLGLLANQRKRQLLIGLLKSLRTIKTLQRTDVRLSEMLEEEDYPGAIQLCLECQKAASTFKHYSCISELNSKLQDTLEQIEEQLDVALSKICKNFDVNHYTKVQQAYRLLGKTQTAMDQLHMHFTQAIHNTVFQVVLGYVELCAGNTDTKFQKLQYKDLCTHVTPDSYIPCLADLCKALWEVMLSYYRTMEWHEKHDSEETAAASEGSNVMSTEETNFDRGYVKKKLEHGLTRIWQDVQLKVKTYLLGTDLSIFKYDDFIFVLDIVSRLMQVGEEFCGSKSEVLQESIRKQSINYFKNHHRIRLDELRMFLENETWELCPVKSNFSILQLHEFKFLEQSRSPSVSPSKQPSATSSKPVTLFEQYCSGGNPFEIQADHKDEETEDVLASNGYESDEQEKSAYQDYDSDSDVPEELKRDYVDEQTGDVPVKSVSRETLKSRKKSDYSLNKVNAPILTNTTLNVIRLVGKYMQMMNILKPIAFDVIHFMSQLFDYYLYAIYTFFGRNDSLESTGLGLSSSRLRTTLNRIQESLIDLEGSADPTATLTAAEERKEKVPSPHLNQLVILTSGDTLYGLAERVVATESLVFLAEQFEFLQPHLDAVMPAVKKPFLQQFYSQTVSTASELRKPIYWIVAGKAIDYEQMLLLMTNVKWDVKEIMSQHNVYVDALLKEFEQFNKRLNEVSKRVRIPLPVSNILWEHCIRLANRTIVEGYANVKKCSNEGRALMQLDFQQFLMKLEKLTDIRPIPDKEFVEIYIKAYYLTENDMERWIKEHREYSTKQLTNLVNVCLGSHINKKARQKLLAAIDDIDRPKR.

Met1 is subject to N-acetylmethionine. The interval 1 to 25 is disordered; sequence MQKIKSLMTRQGLKSPPESLNDLGA. A Phosphoserine modification is found at Ser15. Coiled coils occupy residues 81 to 107 and 216 to 244; these read LNLQ…VADL and YSCI…LSKI. Phosphoserine occurs at positions 494, 498, 559, and 561. The tract at residues 532–563 is disordered; sequence DEETEDVLASNGYESDEQEKSAYQDYDSDSDV. Lys963 is covalently cross-linked (Glycyl lysine isopeptide (Lys-Gly) (interchain with G-Cter in SUMO1); alternate). Lys963 is covalently cross-linked (Glycyl lysine isopeptide (Lys-Gly) (interchain with G-Cter in SUMO2); alternate).

The protein belongs to the syndetin family. In terms of assembly, component of the endosome-associated retrograde protein (EARP) complex, composed of VPS51, VPS52, VPS53 and VPS50/Syndetin. The EARP complex interacts with EIPR1. Interacts with VPS51 and VPS53 in an EIPR1-independent manner. Expressed in the brain (at protein level).

It localises to the recycling endosome. The protein resides in the membrane. Its function is as follows. Acts as a component of the EARP complex that is involved in endocytic recycling. The EARP complex associates with Rab4-positive endosomes and promotes recycling of internalized transferrin receptor (TFRC) to the plasma membrane. Within the EARP complex, required to tether the complex to recycling endosomes. Not involved in retrograde transport from early and late endosomes to the trans-Golgi network (TGN). The sequence is that of Syndetin from Rattus norvegicus (Rat).